Consider the following 1154-residue polypeptide: MKLTRLRLHGFKSFVEPTDFMIEPGLTGVVGPNGCGKSNLVEALRWAMGETSHKSLRATDMDAVIFAGSGNRPARNHAEVVMSIDNSDRTAPAALNDADTLDISRRIEREAGSVYRINGREVRARDVQLLFADAATGARSPALVHQGKIGEIIQAKPEQRRRVLEDAAGVAGLHARRHEAELRLKAAETNLTRVEDVIGQLSTQVDGLKKQARQAIRFREVAAKVRKTEAMLYHLRWRDAQAEVGAAAEVHDLGVRQLAECTRVQAEASRIQADRASTLPSLREAEARAAAGLQRLINAREQLDREEARAKERVVELERRLTQFSSDVAREQQQAIDADAALERLDTEDVELREEILERVEKRSGVDERVAEADASLGEAEQLFAELTTQLAELTARRNQFEQSVRTHRDRLARLDTEIKNVESEIDRLSAETSGAGDLTELAEAVEIAQELLAEQEGAVQEAEAAQIAARQTLDGSRAPLVDAEKKVQRLETEAKTISKILNGETKNLWPPIIDGITVAKGYEKAIGAVLGDDLDAPVDPSAPMRWTDVGVQPEDPALPEGVEALAQHVTAPPELARRLAQIGVVTKERGNELCEQLKTGQRLVSLDGDVWRWDGFVASAHAPTGAARRLAERARLTDIENELEQARIEATAKRQALETAEADLKMAAAAETASRESLRGARREVDAARERFAAAEREVNRHAARKSALAEAQSRLATDRAEAEAALENAEAQIADLEPNTEAEARLAAVRGDIDGRRRIAAQIRAEAQALAREAELADKRLQAIAAERMDWQKRKAGAASQIATVEERVAELTAERAELENAPEVFAEKRSAVITEIEFAEADRRAAADALAAAEQAMSETDRLAKASLEQLSSAREACARAEERMEAARRRLEDVEREIRDMLEVEPQAAAQLAEIVEGAELPPLAEIEESLDKLRRDRERLGAVNLRAEEELNEVETQHGTLAAERDDLVEAIKKLRTGIQSLNKEARERLLASFDVVNGHFKRLFTTLFGGGEAELKLIESDDPLEAGLDIIAKPPGKKPQSLSLLSGGEQALTAMALIFAVFLTNPSPICVLDEVDAPLDDHNVERFCDLLTDMAKTTETRFITITHNPITMARMNRLFGVTMAERGVSQLVSVDLQGAVDILDQNVA.

Residue 32 to 39 (PNGCGKSN) coordinates ATP. 3 coiled-coil regions span residues 170–215 (VAGL…ARQA), 282–505 (LREA…LNGE), and 627–993 (AARR…EARE).

This sequence belongs to the SMC family. Homodimer.

It is found in the cytoplasm. Its function is as follows. Required for chromosome condensation and partitioning. This Rhodopseudomonas palustris (strain ATCC BAA-98 / CGA009) protein is Chromosome partition protein Smc.